The primary structure comprises 387 residues: 26S proteasome regulatory subunit 6B homolog (387 aa).

175–182 (GPPGTGKT) lines the ATP pocket.

It belongs to the AAA ATPase family. In terms of assembly, the 26S proteasome consists of a 20S proteasome core and two 19S regulatory subunits. The 20S proteasome core is composed of 28 subunits that are arranged in four stacked rings, resulting in a barrel-shaped structure. The two end rings are each formed by seven alpha subunits, and the two central rings are each formed by seven beta subunits. The catalytic chamber with the active sites is on the inside of the barrel.

Its subcellular location is the cytoplasm. It is found in the nucleus. Its function is as follows. Acts as a regulatory subunit of the 26S proteasome which degrades poly-ubiquitinated proteins in the cytoplasm and in the nucleus. It is essential for the regulated turnover of proteins and for the removal of misfolded proteins. The proteasome is a multicatalytic proteinase complex that is characterized by its ability to cleave peptides with Arg, Phe, Tyr, Leu, and Glu adjacent to the leaving group at neutral or slightly basic pH. This is 26S proteasome regulatory subunit 6B homolog from Encephalitozoon cuniculi (strain GB-M1) (Microsporidian parasite).